The chain runs to 213 residues: Peptide methionine sulfoxide reductase MsrA (213 aa).

Cysteine 53 is an active-site residue.

Belongs to the MsrA Met sulfoxide reductase family.

The catalysed reaction is L-methionyl-[protein] + [thioredoxin]-disulfide + H2O = L-methionyl-(S)-S-oxide-[protein] + [thioredoxin]-dithiol. It carries out the reaction [thioredoxin]-disulfide + L-methionine + H2O = L-methionine (S)-S-oxide + [thioredoxin]-dithiol. Functionally, has an important function as a repair enzyme for proteins that have been inactivated by oxidation. Catalyzes the reversible oxidation-reduction of methionine sulfoxide in proteins to methionine. In Serratia proteamaculans (strain 568), this protein is Peptide methionine sulfoxide reductase MsrA.